The chain runs to 143 residues: MNATENFQIIHRYLARQHVLTLCTATGDDVWCANCFYVFNADEIAFWFMTELHTRHGEMMQVNPQVAGTIAGQIRHIAQIKGIQFKGEVIRLEGEKDKVARARYCRRFPVSIAVKTPIWQLNLNEIKMTDNTLGFGKKICWQR.

This sequence belongs to the UPF0306 family.

The chain is UPF0306 protein plu4501 from Photorhabdus laumondii subsp. laumondii (strain DSM 15139 / CIP 105565 / TT01) (Photorhabdus luminescens subsp. laumondii).